Consider the following 355-residue polypeptide: UDP-3-O-acylglucosamine N-acyltransferase (355 aa).

The active-site Proton acceptor is the histidine 252.

Belongs to the transferase hexapeptide repeat family. LpxD subfamily. As to quaternary structure, homotrimer.

The enzyme catalyses a UDP-3-O-[(3R)-3-hydroxyacyl]-alpha-D-glucosamine + a (3R)-hydroxyacyl-[ACP] = a UDP-2-N,3-O-bis[(3R)-3-hydroxyacyl]-alpha-D-glucosamine + holo-[ACP] + H(+). The protein operates within bacterial outer membrane biogenesis; LPS lipid A biosynthesis. Its function is as follows. Catalyzes the N-acylation of UDP-3-O-acylglucosamine using 3-hydroxyacyl-ACP as the acyl donor. Is involved in the biosynthesis of lipid A, a phosphorylated glycolipid that anchors the lipopolysaccharide to the outer membrane of the cell. The polypeptide is UDP-3-O-acylglucosamine N-acyltransferase (Polynucleobacter necessarius subsp. necessarius (strain STIR1)).